The following is a 180-amino-acid chain: Large ribosomal subunit protein uL6 (180 aa).

It belongs to the universal ribosomal protein uL6 family. Part of the 50S ribosomal subunit.

In terms of biological role, this protein binds to the 23S rRNA, and is important in its secondary structure. It is located near the subunit interface in the base of the L7/L12 stalk, and near the tRNA binding site of the peptidyltransferase center. The protein is Large ribosomal subunit protein uL6 of Thermus aquaticus.